The sequence spans 754 residues: Glutathione biosynthesis bifunctional protein GshAB (754 aa).

The glutamate--cysteine ligase stretch occupies residues 1 to 332 (MTLNQLLQKL…QGHALNEKIA (332 aa)). One can recognise an ATP-grasp domain in the interval 488–746 (KKILADASFP…ITTKILDKLF (259 aa)). 515–573 (PLIKDKQIVVKPKSTNFGLGISIFQEPASLDNYQKALEIAFAEDTSVLVEEFIPGTEYR) contributes to the ATP binding site. 3 residues coordinate Mg(2+): aspartate 695, glutamate 716, and asparagine 718. Mn(2+)-binding residues include aspartate 695, glutamate 716, and asparagine 718.

This sequence in the N-terminal section; belongs to the glutamate--cysteine ligase type 1 family. Type 2 subfamily. Monomer. The cofactor is Mg(2+). Requires Mn(2+) as cofactor.

It carries out the reaction L-cysteine + L-glutamate + ATP = gamma-L-glutamyl-L-cysteine + ADP + phosphate + H(+). It catalyses the reaction gamma-L-glutamyl-L-cysteine + glycine + ATP = glutathione + ADP + phosphate + H(+). It functions in the pathway sulfur metabolism; glutathione biosynthesis; glutathione from L-cysteine and L-glutamate: step 1/2. The protein operates within sulfur metabolism; glutathione biosynthesis; glutathione from L-cysteine and L-glutamate: step 2/2. In terms of biological role, synthesizes glutathione from L-glutamate and L-cysteine via gamma-L-glutamyl-L-cysteine. The protein is Glutathione biosynthesis bifunctional protein GshAB of Streptococcus thermophilus (strain ATCC BAA-250 / LMG 18311).